A 202-amino-acid chain; its full sequence is Ribosome maturation factor RimP (202 aa).

It belongs to the RimP family.

The protein localises to the cytoplasm. Functionally, required for maturation of 30S ribosomal subunits. The polypeptide is Ribosome maturation factor RimP (Paracidovorax citrulli (strain AAC00-1) (Acidovorax citrulli)).